A 152-amino-acid polypeptide reads, in one-letter code: Transcriptional repressor NrdR (152 aa).

The segment at 3–34 is a zinc-finger region; that stretch reads CPFCNAADSKVIDSRLAAEGCQIRRRRECVSC. Residues 49–139 form the ATP-cone domain; the sequence is PRVIKSNGKN…VYQDFQDVEA (91 aa).

Belongs to the NrdR family. It depends on Zn(2+) as a cofactor.

Functionally, negatively regulates transcription of bacterial ribonucleotide reductase nrd genes and operons by binding to NrdR-boxes. This chain is Transcriptional repressor NrdR, found in Acinetobacter baumannii (strain AB0057).